We begin with the raw amino-acid sequence, 175 residues long: MEKLTDLNYTLSVITLMNNTLHTILEDPGMAYFPYIASVLTGLFALNKASIPTMKIALKTSKCSYKVVKYCIVTIFNTLLKLAGYKEQITTKDEIEKQMDRVVKEMRRQLEMIDKLTTREIEQVELLKRIYDKLTVQTTGEIDMTKEINQKNVRTLEEWESGKNPYEPREVTAAM.

Residues 1–28 (MEKLTDLNYTLSVITLMNNTLHTILEDP) lie on the Lumenal side of the membrane. N-linked (GlcNAc...) asparagine; by host glycans are attached at residues Asn8 and Asn18. The chain crosses the membrane as a helical; Signal-anchor for type III membrane protein span at residues 29 to 51 (GMAYFPYIASVLTGLFALNKASI). Residues 52-175 (PTMKIALKTS…YEPREVTAAM (124 aa)) lie on the Cytoplasmic side of the membrane. 2 residues coordinate Ca(2+): Glu120 and Gln123. The tract at residues 122–175 (EQVELLKRIYDKLTVQTTGEIDMTKEINQKNVRTLEEWESGKNPYEPREVTAAM) is required for interaction with microtubules. The segment at 159-175 (WESGKNPYEPREVTAAM) is ICP binding domain.

It belongs to the rotavirus NSP4 family. In terms of assembly, homotetramer. Interacts with the immature particle in the viroplasm. Interacts with host CAV1, early and late in infection. Interacts with host integrin ITGA1/ITGB1 heterodimer. Interacts with host integrin ITGA2/ITGB1 heterodimer. Interaction with microtubules blocks trafficking to the Golgi apparatus. Post-translationally, the N-glycosyl content is primarily Man(9)GlcNAc, with a small amount of Man(8)GlcNAc.

The protein localises to the host rough endoplasmic reticulum membrane. It is found in the host membrane. It localises to the host caveola. The protein resides in the secreted. Functionally, plays an essential role in the virus replication cycle by acting as a viroporin. Creates a pore in the host endoplasmic reticulum and as a consequence releases Ca(2+) in the cytoplasm of infected cell. In turn, high levels of cytoplasmic calcium trigger membrane trafficking and transport of viral ER-associated proteins to viroplasms, sites of viral genome replication and immature particle assembly. The secreted form acts as an enterotoxin that causes phospholipase C-dependent elevation of the intracellular calcium concentration in host intestinal mucosa cells. Increased concentration of intracellular calcium disrupts the cytoskeleton and the tight junctions, raising the paracellular permeability. Potentiates chloride ion secretion through a calcium ion-dependent signaling pathway, inducing age-dependent diarrhea. To perform this enterotoxigenic role in vivo, NSP4 is released from infected enterocytes in a soluble form capable of diffusing within the intestinal lumen and interacting with host plasma membrane receptors on neighboring epithelial cells such as integrins ITGA1/ITGB1 and ITGA2/ITGB1. The polypeptide is Non-structural glycoprotein 4 (Rotavirus A (strain RVA/SA11-Both/G3P5B[2]) (RV-A)).